The primary structure comprises 157 residues: Transcription elongation factor GreA (157 aa).

Residues 13–75 are a coiled coil; it reads RARLEAELEE…EIKSILARAQ (63 aa). The segment at 113–142 is disordered; that stretch reads EAKPSEGKISNESPIGSALLGKRPRQKVTV.

It belongs to the GreA/GreB family.

Its function is as follows. Necessary for efficient RNA polymerase transcription elongation past template-encoded arresting sites. The arresting sites in DNA have the property of trapping a certain fraction of elongating RNA polymerases that pass through, resulting in locked ternary complexes. Cleavage of the nascent transcript by cleavage factors such as GreA or GreB allows the resumption of elongation from the new 3'terminus. GreA releases sequences of 2 to 3 nucleotides. This is Transcription elongation factor GreA from Roseiflexus sp. (strain RS-1).